The chain runs to 369 residues: Dehydrogenase pigH (369 aa).

In terms of domain architecture, Enoyl reductase (ER) spans 13–367; sequence KAPLLEVKAA…QGVSAKKIVV (355 aa). 44–49 is a binding site for NADP(+); it reads IDWLIQ. Asparagine 79 and asparagine 101 each carry an N-linked (GlcNAc...) asparagine glycan. NADP(+)-binding positions include 197–200 and tyrosine 215; that span reads SRKN. Residues 280 to 300 traverse the membrane as a helical segment; the sequence is TIIFFVSWIISFKFKGLLKGI. 360 to 361 lines the NADP(+) pocket; the sequence is VS.

It belongs to the zinc-containing alcohol dehydrogenase family.

The protein resides in the membrane. It functions in the pathway secondary metabolite biosynthesis. In terms of biological role, dehydrogenase; part of the gene cluster that mediates the biosynthesis of azaphilone pigments (MonAzPs), a complex mixture of compounds with a common azaphilone skeleton very widely used as food colorants. Within the pathway, pigH might be involved in the late steps of yellow pigments monascin and ankaflavin biosynthesis. The first step of the pathway is performed by the nrPKS pigA that forms the hexaketide precursor from successive condensations of five malonyl-CoA units, with a simple acetyl-CoA starter unit. The role of esterase pigG is not clear, but it may play at most a supplementary role in the formation of the benzaldehyde produced by the pigA nrPKS. This very reactive benzaldehyde is intercepted by the pigC ketoreductase that to provide the first stable enzyme-free MonAzPs intermediate, 6-(4-hydroxy-2-oxopentyl)-3-methyl-2,4-dioxocyclohexane carbaldehyde, also known as M7PKS-1. The FAD-dependent monooxygenase pigN hydroxylates M7PKS-1 at C-4, which triggers the formation of the pyran ring. PigJ, pigK and pigD are involved in the acetylation of the pyran ring. PigJ and pigK form the two subunits of a dedicated fungal FAS that produces the side chain fatty acyl moiety of MonAzPs and pigD transfers the fatty acyl chain to the C-4 alcohol. PigM and pigO are involved in the elimination of the omega-1 alcohol. PigM acts as an O-acetyltransferase that synthesizes the putative O-11 acetyl intermediate whereas pigO eliminates acetic acid to yield an intermediate with a C10(11) double bond. The dehydration of the C-11 alcohol followed by the reduction of the C6(7) double bond by the NAD(P)H-dependent oxidoreductase pigE increases the electrophilicity of the C-5 ketone of the resulting acyl benzopyran. This in turn sets up the C-5 ketone for an intramolecular Knoevenagel aldol condensation with the C-20 enol of the side chain. This condensation affords the characteristic linear tricyclic carbon skeletons of the yellow pigments that serve as the common precursors for the classical yellow pigments monascin and ankaflavin, orange pigments rubopunctatin and monascorubrin, and red pigments ribropunctamine and monascorubramine. The FAD-dependent oxidoreductase pigF is especially invoved in the biosynthesis of orange and red pigments via desaturation of C6(7). The chain is Dehydrogenase pigH from Monascus ruber (Mold).